Here is a 375-residue protein sequence, read N- to C-terminus: Anhydro-N-acetylmuramic acid kinase (375 aa).

14–21 (GTSMDGAD) serves as a coordination point for ATP.

Belongs to the anhydro-N-acetylmuramic acid kinase family.

It catalyses the reaction 1,6-anhydro-N-acetyl-beta-muramate + ATP + H2O = N-acetyl-D-muramate 6-phosphate + ADP + H(+). It functions in the pathway amino-sugar metabolism; 1,6-anhydro-N-acetylmuramate degradation. Its pathway is cell wall biogenesis; peptidoglycan recycling. Its function is as follows. Catalyzes the specific phosphorylation of 1,6-anhydro-N-acetylmuramic acid (anhMurNAc) with the simultaneous cleavage of the 1,6-anhydro ring, generating MurNAc-6-P. Is required for the utilization of anhMurNAc either imported from the medium or derived from its own cell wall murein, and thus plays a role in cell wall recycling. The polypeptide is Anhydro-N-acetylmuramic acid kinase (Cupriavidus pinatubonensis (strain JMP 134 / LMG 1197) (Cupriavidus necator (strain JMP 134))).